Consider the following 239-residue polypeptide: Tetraspanin-9 (239 aa).

Topologically, residues 1–13 (MARGCLCCLKYMM) are cytoplasmic. A helical membrane pass occupies residues 14–34 (FLFNLIFWLCGCGLLGVGIWL). Topologically, residues 35–55 (SVSQGNFATFSPSFPSLSAAN) are extracellular. The chain crosses the membrane as a helical span at residues 56–76 (LVIAIGTIVMVTGFLGCLGAI). The Cytoplasmic segment spans residues 77–85 (KENRCLLLS). The helical transmembrane segment at 86–106 (FFIVLLIILLAELILIILFFV) threads the bilayer. At 107-203 (YMDKVNENAR…VKMWFDDNKH (97 aa)) the chain is on the extracellular side. Asn180 is a glycosylation site (N-linked (GlcNAc...) asparagine). The chain crosses the membrane as a helical span at residues 204-224 (VLGTVGMCILIMQILGMAFSM). The Cytoplasmic portion of the chain corresponds to 225–239 (TLFQHIHRTGKKYDA).

Belongs to the tetraspanin (TM4SF) family. In terms of assembly, found in a complex with GP6. Glycosylated.

The protein resides in the membrane. The chain is Tetraspanin-9 (TSPAN9) from Sus scrofa (Pig).